Consider the following 82-residue polypeptide: RNA-binding protein Hfq (82 aa).

Positions 9–68 (DPYLNTLRKERVPVSIYLVNGIKLQGQIESFDQFVILLKNTVSQMVYKHAISTVVPSRPV) constitute a Sm domain.

The protein belongs to the Hfq family. Homohexamer.

In terms of biological role, RNA chaperone that binds small regulatory RNA (sRNAs) and mRNAs to facilitate mRNA translational regulation in response to envelope stress, environmental stress and changes in metabolite concentrations. Also binds with high specificity to tRNAs. The protein is RNA-binding protein Hfq of Pseudomonas aeruginosa (strain LESB58).